The primary structure comprises 291 residues: ATP synthase gamma chain (291 aa).

Belongs to the ATPase gamma chain family. As to quaternary structure, F-type ATPases have 2 components, CF(1) - the catalytic core - and CF(0) - the membrane proton channel. CF(1) has five subunits: alpha(3), beta(3), gamma(1), delta(1), epsilon(1). CF(0) has three main subunits: a, b and c.

It is found in the cell inner membrane. Produces ATP from ADP in the presence of a proton gradient across the membrane. The gamma chain is believed to be important in regulating ATPase activity and the flow of protons through the CF(0) complex. The chain is ATP synthase gamma chain from Pelodictyon phaeoclathratiforme (strain DSM 5477 / BU-1).